A 290-amino-acid chain; its full sequence is uncharacterized protein (290 aa).

Disordered stretches follow at residues 105-156 (LKHK…KLTV) and 259-290 (EGAQ…KSKK). The span at 114–130 (KATQQARKRNFISSKSK) shows a compositional bias: polar residues. Composition is skewed to basic and acidic residues over residues 143–156 (RESK…KLTV) and 261–280 (AQRD…EPVL).

This is an uncharacterized protein from Homo sapiens (Human).